We begin with the raw amino-acid sequence, 336 residues long: Probable assembly chaperone of rpl4 (336 aa).

TPR repeat units lie at residues 39 to 72 (GRAFELLGEVYAELADVKKARSAFKEAVSRSKNL), 75 to 108 (DQGYEKYLWLAQINDNGSKALKLYQKGVTILERL), 110 to 143 (IDKGEDADLKKKIQGAYCSIAELFMTDLCMQPDA), and 162 to 195 (AEALQTLASMRISQQKIEEAKDALSKCLQSISRA). Residues 316 to 336 (DEENEEAEWETSENEEEMDED) form a disordered region.

It belongs to the ACL4 family.

The protein resides in the cytoplasm. It is found in the nucleus. Its subcellular location is the nucleolus. Functionally, acts as a chaperone for the L4 ribosomal subunit encoded by rpl4A and rpl4B, required for hierarchical ribosome assembly. Shields ribosomal protein L4 until timely release and insertion into the pre-ribosome is possible, once ribosomal protein L18 is present. The protein is Probable assembly chaperone of rpl4 of Schizosaccharomyces pombe (strain 972 / ATCC 24843) (Fission yeast).